Consider the following 593-residue polypeptide: MARSDDADSRAARWEKEAHDLSTQVAFLQEELALVRRKLTESPRQVRQLEERLAAAQAQLARLTENNERLVSTLKEARAQIVTLKEEIDRLAQPPSGYGVFLARHDDGTVDVFTGGRKLRVAVSPSLEVADLRRGQEVLLNDALNIVDAFGYERAGEVVMLKEVLAGPDGAPGDRALVVSHSDEERVVHLAETLIDAPIRAGDSLMIEPRSAYAYERIPKSEVEELVLEEVPDVDYTDIGGLHAQIEQIRDAVELPFLHADLFREHQLRPPKGILLYGPPGCGKTLIAKAVANSLAKKIAERRGEEKHTSYFLNIKGPELLNKYVGETERHIRLVFQRAREKAGEGTPVIVFFDEMDSVFRTRGSGVSSDVENTIVPQLLSEIDGVEGLENVIVIGASNREDMIDPAILRPGRLDVKIKIERPDAEAAKDIFSKYILPGLPLHPDDLAEHDSDPQATVAAMIDAVVLRMYSETEENRFLEVTYANGDKDVLYFKDFNSGAMIQNIVDRGKKMAIKEFLTSARKGMRLQHLLDACVDEFRENEDLPNTTNPDDWARISGKKGERIVYIRTLVSGGKGADAGRSIETASNTGQYL.

A coiled-coil region spans residues Asp-5–Pro-94. Gly-281 to Leu-286 serves as a coordination point for ATP. The segment at Gly-574–Leu-593 is disordered. Positions Glu-584 to Leu-593 are enriched in polar residues. Residues Tyr-592 to Leu-593 form a docks into pockets in the proteasome alpha-ring region.

This sequence belongs to the AAA ATPase family. As to quaternary structure, homohexamer. Assembles into a hexameric ring structure that caps the 20S proteasome core. Strongly interacts with the prokaryotic ubiquitin-like protein Pup through a hydrophobic interface; the interacting region of ARC lies in its N-terminal coiled-coil domain. There is one Pup binding site per ARC hexamer ring. Upon ATP-binding, the C-terminus of ARC interacts with the alpha-rings of the proteasome core, possibly by binding to the intersubunit pockets.

It functions in the pathway protein degradation; proteasomal Pup-dependent pathway. ATPase which is responsible for recognizing, binding, unfolding and translocation of pupylated proteins into the bacterial 20S proteasome core particle. May be essential for opening the gate of the 20S proteasome via an interaction with its C-terminus, thereby allowing substrate entry and access to the site of proteolysis. Thus, the C-termini of the proteasomal ATPase may function like a 'key in a lock' to induce gate opening and therefore regulate proteolysis. In Salinispora tropica (strain ATCC BAA-916 / DSM 44818 / JCM 13857 / NBRC 105044 / CNB-440), this protein is Proteasome-associated ATPase.